The following is a 147-amino-acid chain: MELHSLKAAEGSRKVRNRVGRGTSSGNGKTSGRGQKGQKSRSGGGVRPGFEGGQTELFRRMPKRGFLNVNRKEYAIVNLETLNRLEDGATVSAETLVAAKIIKDVKSGVKVLANGELTAKKLTVKVAKVSAAAKAAIEAAGGSVEEA.

Over residues 1-13 (MELHSLKAAEGSR) the composition is skewed to basic and acidic residues. A disordered region spans residues 1–57 (MELHSLKAAEGSRKVRNRVGRGTSSGNGKTSGRGQKGQKSRSGGGVRPGFEGGQTEL). Composition is skewed to gly residues over residues 23–35 (TSSG…GRGQ) and 42–52 (SGGGVRPGFEG).

Belongs to the universal ribosomal protein uL15 family. In terms of assembly, part of the 50S ribosomal subunit.

Binds to the 23S rRNA. This is Large ribosomal subunit protein uL15 from Lactococcus lactis subsp. lactis (strain IL1403) (Streptococcus lactis).